Consider the following 38-residue polypeptide: Cytochrome b6-f complex subunit 5 (38 aa).

A helical transmembrane segment spans residues 5–25 (LLLGIVLGLIPITLAGLFVAA).

The protein belongs to the PetG family. The 4 large subunits of the cytochrome b6-f complex are cytochrome b6, subunit IV (17 kDa polypeptide, PetD), cytochrome f and the Rieske protein, while the 4 small subunits are PetG, PetL, PetM and PetN. The complex functions as a dimer.

The protein localises to the cellular thylakoid membrane. Component of the cytochrome b6-f complex, which mediates electron transfer between photosystem II (PSII) and photosystem I (PSI), cyclic electron flow around PSI, and state transitions. PetG is required for either the stability or assembly of the cytochrome b6-f complex. The chain is Cytochrome b6-f complex subunit 5 from Crocosphaera subtropica (strain ATCC 51142 / BH68) (Cyanothece sp. (strain ATCC 51142)).